A 271-amino-acid polypeptide reads, in one-letter code: Intercellular adhesion molecule 4 (271 aa).

The N-terminal stretch at 1 to 22 (MGSLFPLSLLFFLAAAYPGVGS) is a signal peptide. The Extracellular portion of the chain corresponds to 23–240 (ALGRRTKRAQ…MLAWSPAPTA (218 aa)). Ig-like C2-type domains lie at 62 to 124 (GKSV…TRWA) and 146 to 217 (GRKY…LNLD). 4 N-linked (GlcNAc...) asparagine glycosylation sites follow: Asn-68, Asn-78, Asn-190, and Asn-223. Cystine bridges form between Cys-69–Cys-113, Cys-69–Cys-117, Cys-73–Cys-117, and Cys-153–Cys-210. The chain crosses the membrane as a helical span at residues 241-261 (LASGSIAALVGILLTVGAAYL). At 262–271 (CKCLAMKSQA) the chain is on the cytoplasmic side.

The protein belongs to the immunoglobulin superfamily. ICAM family. Post-translationally, N- and O-glycosylated. As to expression, erythrocytes.

The protein localises to the cell membrane. It localises to the secreted. In terms of biological role, ICAM proteins are ligands for the leukocyte adhesion protein LFA-1 (integrin alpha-L/beta-2). ICAM4 is also a ligand for alpha-4/beta-1 and alpha-V integrins. In Homo sapiens (Human), this protein is Intercellular adhesion molecule 4 (ICAM4).